The primary structure comprises 1304 residues: Neuronal cell adhesion molecule (1304 aa).

An N-terminal signal peptide occupies residues 1–24 (MQLKIMPKKKRLSAGRVPLILFLC). Topologically, residues 25-1167 (QMISALEVPL…ASRQVDIATQ (1143 aa)) are extracellular. 2 Ig-like domains span residues 46–134 (PTIT…AAVS) and 141–235 (PSRS…QPIS). Cystine bridges form between Cys-68/Cys-123 and Cys-167/Cys-218. Residue Asn-83 is glycosylated (N-linked (GlcNAc...) asparagine). Asn-223, Asn-245, Asn-251, Asn-276, and Asn-314 each carry an N-linked (GlcNAc...) asparagine glycan. 4 consecutive Ig-like domains span residues 267 to 356 (PPTF…ISVR), 361 to 448 (PYWI…AFVN), 454 to 541 (PRIL…VHLE), and 545 to 632 (PTWI…AVLS). Intrachain disulfides connect Cys-292–Cys-340 and Cys-382–Cys-432. 2 N-linked (GlcNAc...) asparagine glycosylation sites follow: Asn-433 and Asn-507. Cystine bridges form between Cys-476–Cys-525 and Cys-567–Cys-616. Asn-619, Asn-716, and Asn-802 each carry an N-linked (GlcNAc...) asparagine glycan. Fibronectin type-III domains follow at residues 649–744 (PPFD…TKAS), 746–843 (PDKN…SGED), 848–950 (APGN…TPEG), 954–1051 (APSS…VDEA), and 1064–1156 (QAVN…TGPA). Residue Asn-858 is glycosylated (N-linked (GlcNAc...) (complex) asparagine). N-linked (GlcNAc...) asparagine glycans are attached at residues Asn-993, Asn-1009, Asn-1019, Asn-1072, Asn-1083, and Asn-1115. Residues 1168 to 1190 (GWFIGLMCAVALLILILLIVCFI) traverse the membrane as a helical segment. Over 1191–1304 (RRNKGGKYPV…SPVNAMNSFV (114 aa)) the chain is Cytoplasmic. Over residues 1199 to 1219 (PVKEKEDAHADPEIQPMKEDD) the composition is skewed to basic and acidic residues. The disordered stretch occupies residues 1199–1304 (PVKEKEDAHA…SPVNAMNSFV (106 aa)). Thr-1221 is subject to Phosphothreonine. The residue at position 1225 (Tyr-1225) is a Phosphotyrosine. Position 1226 is a phosphoserine (Ser-1226). Residues 1241-1250 (PSDRTVKKED) are compositionally biased toward basic and acidic residues. Ser-1251, Ser-1254, Ser-1271, Ser-1290, Ser-1291, and Ser-1295 each carry phosphoserine. Residues 1288–1304 (NESSEAPSPVNAMNSFV) are compositionally biased toward polar residues.

This sequence belongs to the immunoglobulin superfamily. L1/neurofascin/NgCAM family. In terms of assembly, constituent of a NFASC/NRCAM/ankyrin-G complex. Detected in a complex with CNTN1 and PTPRB. Interacts with GLDN/gliomedin. Interacts with MYOC. Detected in all the examined tissues. In the brain it was detected in the amygdala, caudate nucleus, corpus callosum, hippocampus, hypothalamus, substantia nigra, subthalamic nucleus and thalamus.

The protein localises to the cell membrane. It is found in the cell projection. Its subcellular location is the axon. The protein resides in the secreted. Its function is as follows. Cell adhesion protein that is required for normal responses to cell-cell contacts in brain and in the peripheral nervous system. Plays a role in neurite outgrowth in response to contactin binding. Plays a role in mediating cell-cell contacts between Schwann cells and axons. Plays a role in the formation and maintenance of the nodes of Ranvier on myelinated axons. Nodes of Ranvier contain clustered sodium channels that are crucial for the saltatory propagation of action potentials along myelinated axons. During development, nodes of Ranvier are formed by the fusion of two heminodes. Required for normal clustering of sodium channels at heminodes; not required for the formation of mature nodes with normal sodium channel clusters. Required, together with GLDN, for maintaining NFASC and sodium channel clusters at mature nodes of Ranvier. The polypeptide is Neuronal cell adhesion molecule (NRCAM) (Homo sapiens (Human)).